The sequence spans 1254 residues: Structural polyprotein (1254 aa).

The interval 1–33 (MFPFQPMYPMQPMPYRNPFAAPRRPWFPRTDPF) is necessary for nucleocapsid assembly and virus assembly. Positions 33 to 68 (FLAMQVQELTRSMANLTFKQRRGAPPEGPPAKKSKR) are host transcription inhibition. The Supraphysiological nuclear export signal motif lies at 41–48 (LTRSMANL). Asn47 is a glycosylation site (N-linked (GlcNAc...) asparagine; by host). The tract at residues 48–118 (LTFKQRRGAP…KKPGKRQRMV (71 aa)) is disordered. The Nuclear localization signal motif lies at 64-68 (KKSKR). Residues 76–91 (GGQRKKKKNEGKKKAK) are compositionally biased toward basic residues. The interval 90 to 126 (AKTGPPNLKTQNGNKKKTNKKPGKRQRMVMKLESDKT) is binding to the viral RNA. Phosphothreonine is present on residues Thr92 and Thr107. Over residues 103–117 (NKKKTNKKPGKRQRM) the composition is skewed to basic residues. The tract at residues 111 to 125 (PGKRQRMVMKLESDK) is ribosome-binding. Phosphoserine is present on Ser123. Residues 125-274 (KTFPIMLEGK…KYTPENCEQW (150 aa)) enclose the Peptidase S3 domain. Phosphothreonine is present on Thr126. His151 acts as the Charge relay system in catalysis. Residues 167–172 (KKASKY) are interaction with spike glycoprotein E2. Catalysis depends on charge relay system residues Asp173 and Ser225. The interval 259–263 (EKGVT) is interaction with spike glycoprotein E2. The segment at 275-286 (SLVTTMCLLANV) is functions as an uncleaved signal peptide for the precursor of protein E3/E2. Residues 275–702 (SLVTTMCLLA…YHRYPMSTIT (428 aa)) lie on the Extracellular side of the membrane. 7 disulfides stabilise this stretch: Cys281–Cys290, Cys352–Cys456, Cys355–Cys360, Cys423–Cys437, Cys484–Cys599, Cys533–Cys559, and Cys535–Cys553. The N-linked (GlcNAc...) asparagine; by host glycan is linked to Asn285. N-linked (GlcNAc...) asparagine; by host glycosylation is found at Asn545 and Asn651. A helical transmembrane segment spans residues 703–723 (GLSICAAIVAVSIAASTWLLC). Positions 724-728 (RSRAS) are interaction with the capsid protein. The Cytoplasmic portion of the chain corresponds to 724 to 756 (RSRASCLTPYRLTPNAKMPLCLAVLCCARSARA). S-palmitoyl cysteine; by host attachment occurs at residues Cys729, Cys749, and Cys750. Cys729 and Cys750 are oxidised to a cystine. The segment at 735-754 (LTPNAKMPLCLAVLCCARSA) is transient transmembrane before p62-6K protein processing. The Extracellular segment spans residues 757-768 (ETTWESLDHLWN). Residues 769–789 (NNQQMFWTQLLIPLAALIVVT) form a helical membrane-spanning segment. Arg790 is a topological domain (cytoplasmic). Residues 791–811 (LLKCMCCVVPFLVVAGAAGAG) form a helical membrane-spanning segment. The Extracellular segment spans residues 812-1224 (AYEHATTMPN…SKTAWTWLTS (413 aa)). 4 disulfides stabilise this stretch: Cys861–Cys926, Cys874–Cys906, Cys875–Cys908, and Cys880–Cys890. Residues 896 to 913 (VYPFMWGGAYCFCDTENT) form an E1 fusion peptide loop region. Residues Asn946 and Asn1082 are each glycosylated (N-linked (GlcNAc...) asparagine; by host). Disulfide bonds link Cys1071–Cys1083, Cys1113–Cys1188, Cys1118–Cys1192, and Cys1140–Cys1182. The helical transmembrane segment at 1225-1245 (LLGGSAVIIIIGLVLATLVAM) threads the bilayer. The Cytoplasmic portion of the chain corresponds to 1246–1254 (YVLTNQKHN).

As to quaternary structure, homodimer. Homomultimer. Interacts with host karyopherin KPNA4; this interaction allows the nuclear import of the viral capsid protein. Interacts with spike glycoprotein E2. Interacts with host IRAK1; the interaction leads to inhibition of IRAK1-dependent signaling. Part of a tetrameric complex composed of host CRM1, host importin alpha/beta dimer and the viral capsid; this complex blocks the receptor-mediated transport through the nuclear pore. Interacts with host phosphatase PPP1CA; this interaction dephosphorylates the capsid protein, which increases its ability to bind to the viral genome. The precursor of protein E3/E2 and E1 form a heterodimer shortly after synthesis. In terms of assembly, interacts with spike glycoprotein E2. The precursor of protein E3/E2 and E1 form a heterodimer shortly after synthesis. Processing of the precursor of protein E3/E2 into E2 and E3 results in a heterodimer of the spike glycoproteins E2 and E1. Spike at virion surface are constituted of three E2-E1 heterodimers. After target cell attachment and endocytosis, E1 change conformation to form homotrimers. Interacts with 6K protein. Interacts with host LDLRAD3; this interaction mediates viral entry to the host cell. As to quaternary structure, interacts with spike glycoprotein E1. Processing of the precursor of protein E3/E2 into E2 and E3 results in a heterodimer of the spike glycoproteins E2 and E1. Spike at virion surface are constituted of a trimer of E2-E1 heterodimers. Interacts with 6K protein. Interacts with host LDLRAD3; this interaction mediates viral entry to the host cell. Oligomer. Interacts with spike glycoprotein E1. Interacts with spike glycoprotein E2. Post-translationally, structural polyprotein: Specific enzymatic cleavages in vivo yield mature proteins. Capsid protein is auto-cleaved during polyprotein translation, unmasking a signal peptide at the N-terminus of the precursor of E3/E2. The remaining polyprotein is then targeted to the host endoplasmic reticulum, where host signal peptidase cleaves it into pE2, 6K and E1 proteins. pE2 is further processed to mature E3 and E2 by host furin in trans-Golgi vesicle. In terms of processing, phosphorylated on serine and threonine residues. Palmitoylated via thioester bonds. These palmitoylations may induce disruption of the C-terminus transmembrane. This would result in the reorientation of E2 C-terminus from lumenal to cytoplasmic side. Post-translationally, N-glycosylated. In terms of processing, palmitoylated via thioester bonds.

Its subcellular location is the virion. It is found in the host cytoplasm. The protein localises to the host cell membrane. It localises to the host nucleus. The protein resides in the virion membrane. Its subcellular location is the host Golgi apparatus. It is found in the host trans-Golgi network. The protein localises to the host endoplasmic reticulum. The enzyme catalyses Autocatalytic release of the core protein from the N-terminus of the togavirus structural polyprotein by hydrolysis of a -Trp-|-Ser- bond.. Its function is as follows. Forms an icosahedral capsid with a T=4 symmetry composed of 240 copies of the capsid protein surrounded by a lipid membrane through which penetrate 80 spikes composed of trimers of E1-E2 heterodimers. The capsid protein binds to the viral RNA genome at a site adjacent to a ribosome binding site for viral genome translation following genome release. Possesses a protease activity that results in its autocatalytic cleavage from the nascent structural protein. Following its self-cleavage, the capsid protein transiently associates with ribosomes, and within several minutes the protein binds to viral RNA and rapidly assembles into icosahedric core particles. The resulting nucleocapsid eventually associates with the cytoplasmic domain of the spike glycoprotein E2 at the cell membrane, leading to budding and formation of mature virions. In case of infection, new virions attach to target cells and after clathrin-mediated endocytosis their membrane fuses with the host endosomal membrane. This leads to the release of the nucleocapsid into the cytoplasm, followed by an uncoating event necessary for the genomic RNA to become accessible. The uncoating might be triggered by the interaction of capsid proteins with ribosomes. Binding of ribosomes would release the genomic RNA since the same region is genomic RNA-binding and ribosome-binding. Specifically inhibits interleukin-1 receptor-associated kinase 1/IRAK1-dependent signaling during viral entry, representing a means by which the alphaviruses may evade innate immune detection and activation prior to viral gene expression. Inhibits host transcription. Forms a tetrameric complex with XPO1/CRM1 and the nuclear import receptor importin. This complex blocks the central channel of host nuclear pores thereby inhibiting the receptor-mediated nuclear transport and thus the host mRNA and rRNA transcription. The inhibition of transcription is linked to a cytopathic effect on the host cell. Functionally, provides the signal sequence for the translocation of the precursor of protein E3/E2 to the host endoplasmic reticulum. Furin-cleaved E3 remains associated with spike glycoprotein E1 and mediates pH protection of the latter during the transport via the secretory pathway. After virion release from the host cell, the assembly protein E3 is gradually released in the extracellular space. In terms of biological role, plays a role in viral attachment to target host cell, by binding to the cell receptor LDLRAD3. Synthesized as a p62 precursor which is processed by furin at the cell membrane just before virion budding, giving rise to E2-E1 heterodimer. The p62-E1 heterodimer is stable, whereas E2-E1 is unstable and dissociate at low pH. p62 is processed at the last step, presumably to avoid E1 fusion activation before its final export to cell surface. E2 C-terminus contains a transitory transmembrane that would be disrupted by palmitoylation, resulting in reorientation of the C-terminal tail from lumenal to cytoplasmic side. This step is critical since E2 C-terminus is involved in budding by interacting with capsid proteins. This release of E2 C-terminus in cytoplasm occurs lately in protein export, and precludes premature assembly of particles at the endoplasmic reticulum membrane. Acts as a viroporin that participates in virus glycoprotein processing and transport to the plasma membrane, cell permeabilization and budding of viral particles. Disrupts the calcium homeostasis of the cell, probably at the endoplasmic reticulum level. This leads to cytoplasmic calcium elevation. Because of its lipophilic properties, the 6K protein is postulated to influence the selection of lipids that interact with the transmembrane domains of the glycoproteins, which, in turn, affects the deformability of the bilayer required for the extreme curvature that occurs as budding proceeds. Present in low amount in virions, about 3% compared to viral glycoproteins. Its function is as follows. Class II viral fusion protein. Fusion activity is inactive as long as E1 is bound to E2 in mature virion. After virus attachment to cell receptor LDLRAD3 and endocytosis, acidification of the endosome induce dissociation of E1/E2 heterodimer and concomitant trimerization of the E1 subunits. This E1 trimer is fusion active, and promotes release of viral nucleocapsid in cytoplasm after endosome and viral membrane fusion. Efficient fusion requires the presence of cholesterol and sphingolipid in the target membrane. This chain is Structural polyprotein, found in Venezuelan equine encephalitis virus (strain Everglades Fe3-7c) (VEEV).